Reading from the N-terminus, the 342-residue chain is MELNSSSRVDSEFRYTLFPIVYSIIFVLGIIANGYVLWVFARLYPSKKLNEIKIFMVNLTVADLLFLITLPLWIVYYSNQGNWFLPKFLCNLAGCLFFINTYCSVAFLGVITYNRFQAVKYPIKTAQATTRKRGIALSLVIWVAIVAAASYFLVMDSTNVVSNKAGSGNITRCFEHYEKGSKPVLIIHICIVLGFFIVFLLILFCNLVIIHTLLRQPVKQQRNAEVRRRALWMVCTVLAVFVICFVPHHMVQLPWTLAELGMWPSSNHQAINDAHQVTLCLLSTNCVLDPVIYCFLTKKFRKHLSEKLNIMRSSQKCSRVTTDTGTEMAIPINHTPVNPIKN.

The Extracellular portion of the chain corresponds to 1 to 16 (MELNSSSRVDSEFRYT). N-linked (GlcNAc...) asparagine glycosylation is present at Asn4. A helical transmembrane segment spans residues 17-38 (LFPIVYSIIFVLGIIANGYVLW). At 39 to 54 (VFARLYPSKKLNEIKI) the chain is on the cytoplasmic side. Residues 55-74 (FMVNLTVADLLFLITLPLWI) form a helical membrane-spanning segment. At 75 to 91 (VYYSNQGNWFLPKFLCN) the chain is on the extracellular side. A disulfide bridge links Cys90 with Cys173. Residues 92–113 (LAGCLFFINTYCSVAFLGVITY) traverse the membrane as a helical segment. Residues 114–133 (NRFQAVKYPIKTAQATTRKR) lie on the Cytoplasmic side of the membrane. Residues 134 to 155 (GIALSLVIWVAIVAAASYFLVM) traverse the membrane as a helical segment. The Extracellular segment spans residues 156–184 (DSTNVVSNKAGSGNITRCFEHYEKGSKPV). Asn169 carries N-linked (GlcNAc...) asparagine glycosylation. Residues 185 to 205 (LIIHICIVLGFFIVFLLILFC) form a helical membrane-spanning segment. Over 206-233 (NLVIIHTLLRQPVKQQRNAEVRRRALWM) the chain is Cytoplasmic. Residues 234-254 (VCTVLAVFVICFVPHHMVQLP) traverse the membrane as a helical segment. Residues 255-276 (WTLAELGMWPSSNHQAINDAHQ) lie on the Extracellular side of the membrane. A helical membrane pass occupies residues 277-296 (VTLCLLSTNCVLDPVIYCFL). Over 297–342 (TKKFRKHLSEKLNIMRSSQKCSRVTTDTGTEMAIPINHTPVNPIKN) the chain is Cytoplasmic.

This sequence belongs to the G-protein coupled receptor 1 family. In terms of assembly, interacts with ARRB1.

It localises to the cell membrane. Functionally, receptor for platelet activating factor, a chemotactic phospholipid mediator that possesses potent inflammatory, smooth-muscle contractile and hypotensive activity. Seems to mediate its action via a G protein that activates a phosphatidylinositol-calcium second messenger system. The sequence is that of Platelet-activating factor receptor (PTAFR) from Cavia porcellus (Guinea pig).